The following is a 223-amino-acid chain: NLP effector protein 3 (223 aa).

Positions Ala90 to Asp100 match the Conserved undecapeptide motif motif. The short motif at Gly107–Glu113 is the Conserved heptapeptide motif element.

Belongs to the Necrosis inducing protein (NPP1) family.

It localises to the secreted. It is found in the host cytoplasm. Probable secreted effector that may act as a pathogen-associated molecular pattern (PAMP) recognized by the plant immune system. Seems not to induce necrosis, neither in several susceptible or resistant Vitis species nor in the dicot model plant Nicotiana benthamiana. In Plasmopara viticola (Downy mildew of grapevine), this protein is NLP effector protein 3.